The sequence spans 141 residues: Mitochondrial import inner membrane translocase subunit Tim16 (141 aa).

Disordered stretches follow at residues 34–53 and 108–141; these read AARR…SNLR and LDHE…RQRR. Positions 60-113 are J-like; it reads EAKQILNIDDPKNVDAITKNYEHLFQVNERSKGGSFYIQSKVFRAKERLDHEIK. A compositionally biased stretch (basic and acidic residues) spans 108-118; sequence LDHEIKAHEQP.

Belongs to the TIM16/PAM16 family. Probable component of the PAM complex at least composed of a mitochondrial HSP70 protein, Roe1, TIM44, blp/TIM16 and TIM14. Associates with the TIM23 complex. As to expression, expressed in distinct cells in the embryonic and larval nervous system.

It localises to the mitochondrion inner membrane. Functionally, regulates ATP-dependent protein translocation into the mitochondrial matrix. Essential for larval development. This is Mitochondrial import inner membrane translocase subunit Tim16 (blp) from Drosophila melanogaster (Fruit fly).